Here is a 100-residue protein sequence, read N- to C-terminus: Cell division protein FtsB (100 aa).

The Cytoplasmic segment spans residues 1 to 3 (MKQ). The chain crosses the membrane as a helical span at residues 4 to 21 (LIFLLICLLSLLQYRLWL). Topologically, residues 22-100 (GDNNLSEYVL…ELRERNPFNR (79 aa)) are periplasmic. Residues 49-73 (RNQILKEEIIDLKRGTEAIEERARN) adopt a coiled-coil conformation.

It belongs to the FtsB family. In terms of assembly, part of a complex composed of FtsB, FtsL and FtsQ.

Its subcellular location is the cell inner membrane. Essential cell division protein. May link together the upstream cell division proteins, which are predominantly cytoplasmic, with the downstream cell division proteins, which are predominantly periplasmic. The protein is Cell division protein FtsB of Shewanella frigidimarina (strain NCIMB 400).